Here is a 633-residue protein sequence, read N- to C-terminus: Chaperone protein DnaK (633 aa).

Phosphothreonine; by autocatalysis is present on Thr-198. The disordered stretch occupies residues 599–633 (QQASQETPGDGDAGAAGAKKKDDDDVVDADYEEVK). The span at 622–633 (DDVVDADYEEVK) shows a compositional bias: acidic residues.

The protein belongs to the heat shock protein 70 family.

Acts as a chaperone. In Desulfotalea psychrophila (strain LSv54 / DSM 12343), this protein is Chaperone protein DnaK.